Consider the following 359-residue polypeptide: 1-deoxy-D-xylulose 5-phosphate reductoisomerase (359 aa).

NADPH contacts are provided by threonine 7, glycine 8, serine 9, isoleucine 10, alanine 31, asparagine 33, and asparagine 111. Lysine 112 is a binding site for 1-deoxy-D-xylulose 5-phosphate. Glutamate 113 provides a ligand contact to NADPH. Aspartate 131 serves as a coordination point for Mn(2+). The 1-deoxy-D-xylulose 5-phosphate site is built by serine 132, glutamate 133, serine 155, and histidine 178. Glutamate 133 contributes to the Mn(2+) binding site. Position 184 (glycine 184) interacts with NADPH. 1-deoxy-D-xylulose 5-phosphate is bound by residues serine 191, asparagine 196, lysine 197, and glutamate 200. Residue glutamate 200 participates in Mn(2+) binding.

Belongs to the DXR family. It depends on Mg(2+) as a cofactor. Requires Mn(2+) as cofactor.

It carries out the reaction 2-C-methyl-D-erythritol 4-phosphate + NADP(+) = 1-deoxy-D-xylulose 5-phosphate + NADPH + H(+). Its pathway is isoprenoid biosynthesis; isopentenyl diphosphate biosynthesis via DXP pathway; isopentenyl diphosphate from 1-deoxy-D-xylulose 5-phosphate: step 1/6. In terms of biological role, catalyzes the NADPH-dependent rearrangement and reduction of 1-deoxy-D-xylulose-5-phosphate (DXP) to 2-C-methyl-D-erythritol 4-phosphate (MEP). The protein is 1-deoxy-D-xylulose 5-phosphate reductoisomerase of Campylobacter hominis (strain ATCC BAA-381 / DSM 21671 / CCUG 45161 / LMG 19568 / NCTC 13146 / CH001A).